Reading from the N-terminus, the 278-residue chain is Putative transposase for insertion sequence element IS986/IS6110 (278 aa).

The region spanning 101–268 (GPPAPNRLWV…VPPVELEAAY (168 aa)) is the Integrase catalytic domain.

In terms of biological role, involved in the transposition of the insertion sequence. This chain is Putative transposase for insertion sequence element IS986/IS6110, found in Mycobacterium tuberculosis (strain CDC 1551 / Oshkosh).